Consider the following 490-residue polypeptide: Cytochrome P450 71A21 (490 aa).

A helical transmembrane segment spans residues 1 to 21 (MESMTMIILQSLIIFITILFF). Position 432 (cysteine 432) interacts with heme.

Belongs to the cytochrome P450 family. It depends on heme as a cofactor.

The protein resides in the membrane. This chain is Cytochrome P450 71A21 (CYP71A21), found in Arabidopsis thaliana (Mouse-ear cress).